The primary structure comprises 154 residues: Transcriptional repressor NrdR (154 aa).

A zinc finger spans residues 3-34; the sequence is CPHCHKNGSRVVDSRPSEDGSFIRRRRECIHC. An ATP-cone domain is found at 49 to 139; that stretch reads LLVIKKDGTR…VYRQFKDVDA (91 aa).

The protein belongs to the NrdR family. Requires Zn(2+) as cofactor.

Functionally, negatively regulates transcription of bacterial ribonucleotide reductase nrd genes and operons by binding to NrdR-boxes. The polypeptide is Transcriptional repressor NrdR (Limosilactobacillus reuteri (strain DSM 20016) (Lactobacillus reuteri)).